Consider the following 338-residue polypeptide: Ribosomal RNA small subunit methyltransferase C (338 aa).

Belongs to the methyltransferase superfamily. RsmC family. Monomer.

It localises to the cytoplasm. It catalyses the reaction guanosine(1207) in 16S rRNA + S-adenosyl-L-methionine = N(2)-methylguanosine(1207) in 16S rRNA + S-adenosyl-L-homocysteine + H(+). Specifically methylates the guanine in position 1207 of 16S rRNA in the 30S particle. The sequence is that of Ribosomal RNA small subunit methyltransferase C from Acinetobacter baylyi (strain ATCC 33305 / BD413 / ADP1).